The primary structure comprises 129 residues: Small ribosomal subunit protein uS11 (129 aa).

It belongs to the universal ribosomal protein uS11 family. In terms of assembly, part of the 30S ribosomal subunit. Interacts with proteins S7 and S18. Binds to IF-3.

Located on the platform of the 30S subunit, it bridges several disparate RNA helices of the 16S rRNA. Forms part of the Shine-Dalgarno cleft in the 70S ribosome. This is Small ribosomal subunit protein uS11 from Macrococcus caseolyticus (strain JCSC5402) (Macrococcoides caseolyticum).